Consider the following 107-residue polypeptide: Prokineticin-2 (107 aa).

An N-terminal signal peptide occupies residues 1 to 26 (MEDPRCAPLLLLLLLPLLLTPPAGDA). 5 cysteine pairs are disulfide-bonded: Cys-33/Cys-45, Cys-39/Cys-57, Cys-44/Cys-85, Cys-67/Cys-93, and Cys-87/Cys-103.

This sequence belongs to the AVIT (prokineticin) family. Expressed at high levels in testis and at lower levels in brain, lung, ovary, spleen, thymus and uterus.

It localises to the secreted. Functionally, may function as an output molecule from the suprachiasmatic nucleus (SCN) that transmits behavioral circadian rhythm. May also function locally within the SCN to synchronize output. Potently contracts gastrointestinal (GI) smooth muscle. The sequence is that of Prokineticin-2 (Prok2) from Rattus norvegicus (Rat).